The primary structure comprises 131 residues: Large ribosomal subunit protein bL12 (131 aa).

The protein belongs to the bacterial ribosomal protein bL12 family. In terms of assembly, homodimer. Part of the ribosomal stalk of the 50S ribosomal subunit. Forms a multimeric L10(L12)X complex, where L10 forms an elongated spine to which 2 to 4 L12 dimers bind in a sequential fashion. Binds GTP-bound translation factors.

Forms part of the ribosomal stalk which helps the ribosome interact with GTP-bound translation factors. Is thus essential for accurate translation. The chain is Large ribosomal subunit protein bL12 from Prochlorococcus marinus (strain MIT 9312).